We begin with the raw amino-acid sequence, 964 residues long: Glycine dehydrogenase (decarboxylating) (964 aa).

Polar residues predominate over residues 1–10 (MNSTLQNRNR). The segment at 1–25 (MNSTLQNRNRTNLERVSTDPLDTFP) is disordered. Lysine 713 carries the N6-(pyridoxal phosphate)lysine modification.

This sequence belongs to the GcvP family. As to quaternary structure, the glycine cleavage system is composed of four proteins: P, T, L and H. It depends on pyridoxal 5'-phosphate as a cofactor.

It carries out the reaction N(6)-[(R)-lipoyl]-L-lysyl-[glycine-cleavage complex H protein] + glycine + H(+) = N(6)-[(R)-S(8)-aminomethyldihydrolipoyl]-L-lysyl-[glycine-cleavage complex H protein] + CO2. The glycine cleavage system catalyzes the degradation of glycine. The P protein binds the alpha-amino group of glycine through its pyridoxal phosphate cofactor; CO(2) is released and the remaining methylamine moiety is then transferred to the lipoamide cofactor of the H protein. The chain is Glycine dehydrogenase (decarboxylating) from Leptospira borgpetersenii serovar Hardjo-bovis (strain JB197).